The primary structure comprises 149 residues: D-aminoacyl-tRNA deacylase (149 aa).

The Gly-cisPro motif, important for rejection of L-amino acids motif lies at 137–138 (GP).

It belongs to the DTD family. As to quaternary structure, homodimer.

The protein resides in the cytoplasm. It catalyses the reaction glycyl-tRNA(Ala) + H2O = tRNA(Ala) + glycine + H(+). The enzyme catalyses a D-aminoacyl-tRNA + H2O = a tRNA + a D-alpha-amino acid + H(+). In terms of biological role, an aminoacyl-tRNA editing enzyme that deacylates mischarged D-aminoacyl-tRNAs. Also deacylates mischarged glycyl-tRNA(Ala), protecting cells against glycine mischarging by AlaRS. Acts via tRNA-based rather than protein-based catalysis; rejects L-amino acids rather than detecting D-amino acids in the active site. By recycling D-aminoacyl-tRNA to D-amino acids and free tRNA molecules, this enzyme counteracts the toxicity associated with the formation of D-aminoacyl-tRNA entities in vivo and helps enforce protein L-homochirality. The sequence is that of D-aminoacyl-tRNA deacylase from Paracoccus denitrificans (strain Pd 1222).